The sequence spans 449 residues: Tubulin beta-8 chain (449 aa).

Gln11, Glu69, Ser138, Gly142, Thr143, Gly144, Asn204, and Asn226 together coordinate GTP. Glu69 is a binding site for Mg(2+). Residues 428–449 (ATADEEEGYEYEEDEVEVQEEQ) form a disordered region. The segment covering 429-449 (TADEEEGYEYEEDEVEVQEEQ) has biased composition (acidic residues).

The protein belongs to the tubulin family. In terms of assembly, dimer of alpha and beta chains. A typical microtubule is a hollow water-filled tube with an outer diameter of 25 nm and an inner diameter of 15 nM. Alpha-beta heterodimers associate head-to-tail to form protofilaments running lengthwise along the microtubule wall with the beta-tubulin subunit facing the microtubule plus end conferring a structural polarity. Microtubules usually have 13 protofilaments but different protofilament numbers can be found in some organisms and specialized cells. Mg(2+) serves as cofactor.

The protein resides in the cytoplasm. The protein localises to the cytoskeleton. Functionally, tubulin is the major constituent of microtubules, a cylinder consisting of laterally associated linear protofilaments composed of alpha- and beta-tubulin heterodimers. Microtubules grow by the addition of GTP-tubulin dimers to the microtubule end, where a stabilizing cap forms. Below the cap, tubulin dimers are in GDP-bound state, owing to GTPase activity of alpha-tubulin. This chain is Tubulin beta-8 chain (TUBB8), found in Arabidopsis thaliana (Mouse-ear cress).